Consider the following 121-residue polypeptide: Protein TCL1B5 (121 aa).

It belongs to the TCL1 family.

This chain is Protein TCL1B5 (Tcl1b5), found in Mus musculus (Mouse).